Consider the following 440-residue polypeptide: RUN domain-containing protein 3A (440 aa).

The region spanning Asp-52–Glu-184 is the RUN domain. The interval Asp-213–Leu-233 is disordered. A coiled-coil region spans residues Tyr-262 to Leu-317. The disordered stretch occupies residues Leu-374–Leu-402.

It belongs to the RUNDC3 family.

This Xenopus tropicalis (Western clawed frog) protein is RUN domain-containing protein 3A (rundc3a).